Reading from the N-terminus, the 230-residue chain is 6-carboxyhexanoate--CoA ligase (230 aa).

This sequence belongs to the BioW family. Homodimer. The cofactor is Mg(2+).

The catalysed reaction is heptanedioate + ATP + CoA = 6-carboxyhexanoyl-CoA + AMP + diphosphate. It functions in the pathway metabolic intermediate metabolism; pimeloyl-CoA biosynthesis; pimeloyl-CoA from pimelate: step 1/1. Its function is as follows. Catalyzes the transformation of pimelate into pimeloyl-CoA with concomitant hydrolysis of ATP to AMP. This Staphylococcus aureus (strain MSSA476) protein is 6-carboxyhexanoate--CoA ligase.